A 122-amino-acid chain; its full sequence is Holo-[acyl-carrier-protein] synthase (122 aa).

The Mg(2+) site is built by Asp-8 and Glu-60.

This sequence belongs to the P-Pant transferase superfamily. AcpS family. Requires Mg(2+) as cofactor.

The protein localises to the cytoplasm. It catalyses the reaction apo-[ACP] + CoA = holo-[ACP] + adenosine 3',5'-bisphosphate + H(+). Functionally, transfers the 4'-phosphopantetheine moiety from coenzyme A to a Ser of acyl-carrier-protein. This is Holo-[acyl-carrier-protein] synthase from Anaplasma phagocytophilum (strain HZ).